The chain runs to 586 residues: Axin-like protein pry-1 (586 aa).

The tract at residues 1 to 135 (METHLGWARS…FIEAFNKMSS (135 aa)) is required for interaction with apr-1. Residues 10-131 (SLEAVLSDRS…GSEEFIEAFN (122 aa)) enclose the RGS domain. Disordered stretches follow at residues 137–168 (TADQ…KSAA), 344–442 (MTDD…DSFA), and 478–501 (TSSL…HSKI). 2 stretches are compositionally biased toward polar residues: residues 151–168 (HQNT…KSAA) and 368–388 (GEGS…QLHN). Over residues 421-442 (SQSMCAPSYSSASSSYSRDSFA) the composition is skewed to low complexity. Residues 486 to 501 (RRQHRKAPTPKKHSKI) are compositionally biased toward basic residues. Residues 505-586 (LSNLITISYL…FEGRIAAELR (82 aa)) form the DIX domain.

As to quaternary structure, interacts (via N-terminus) with apr-1 (via C-terminus). Interacts with bar-1 (via ARM repeats), gsk-3, and mig-5. In terms of tissue distribution, expressed in hypodermal cells (seam cells) V5 and V6, Q neuroblasts, ventral hypodermal cells P7/8 to P11/12, body wall muscle cells and neurons in the head, the tail and the ventral nerve cord.

It localises to the cell membrane. It is found in the nucleus. The protein resides in the cytoplasm. The protein localises to the cell cortex. Functionally, works in parallel with axl-1 in negatively regulating bar-1 signaling in vulval precursor cells and Q neuroblasts. Inhibits Wnt signaling, which affects tissue specific expression of Hox genes, egl-5, lin-39 and mab-5. This in turn affects QR (postembryonic neuroblast) cell migration, vulval cell fate specification, and the development of sensory structures by the seam cell lineage. Has a role in alae V cell patterning, ray formation in the male tail and axon guidance. Does not affect B cell polarity. This Caenorhabditis elegans protein is Axin-like protein pry-1.